The primary structure comprises 809 residues: Lon protease (809 aa).

Positions 42–242 (LVIYPLGGRP…KVLTLLKKEL (201 aa)) constitute a Lon N-terminal domain. Residue 395-402 (GPPGVGKT) participates in ATP binding. One can recognise a Lon proteolytic domain in the interval 629-809 (LTGVGIVTGL…YAEVAKLVFG (181 aa)). Active-site residues include Ser-716 and Lys-759.

The protein belongs to the peptidase S16 family. In terms of assembly, homohexamer. Organized in a ring with a central cavity.

It is found in the cytoplasm. The enzyme catalyses Hydrolysis of proteins in presence of ATP.. Functionally, ATP-dependent serine protease that mediates the selective degradation of mutant and abnormal proteins as well as certain short-lived regulatory proteins. Required for cellular homeostasis and for survival from DNA damage and developmental changes induced by stress. Degrades polypeptides processively to yield small peptide fragments that are 5 to 10 amino acids long. Binds to DNA in a double-stranded, site-specific manner. This is Lon protease from Magnetococcus marinus (strain ATCC BAA-1437 / JCM 17883 / MC-1).